The following is a 156-amino-acid chain: Ribosomal RNA large subunit methyltransferase H (156 aa).

S-adenosyl-L-methionine contacts are provided by residues L73, G104, and 123 to 128 (VSSLTL).

The protein belongs to the RNA methyltransferase RlmH family. Homodimer.

The protein resides in the cytoplasm. It carries out the reaction pseudouridine(1915) in 23S rRNA + S-adenosyl-L-methionine = N(3)-methylpseudouridine(1915) in 23S rRNA + S-adenosyl-L-homocysteine + H(+). Functionally, specifically methylates the pseudouridine at position 1915 (m3Psi1915) in 23S rRNA. This chain is Ribosomal RNA large subunit methyltransferase H, found in Paraburkholderia phymatum (strain DSM 17167 / CIP 108236 / LMG 21445 / STM815) (Burkholderia phymatum).